Consider the following 204-residue polypeptide: MDYEIENNHADSIRRGSIEVICGSMFSGKTEELLRRLRRAKIARQTVEIFKPTIDIRYDETDVVSHDKNAIASAPVDNSANILLLSSQVDVVGIDEAQFFDEGLVEVAQQLADQGVRVVIAGLDMDFRRQPFGPMPGLCAIADSVTKVHAVCVECGRLASYSFRRVQGDQQVMLGELNEYSPLCRTCYRKCSSPPQTEEIHSTI.

ATP-binding positions include 23–30 (GSMFSGKT) and 95–98 (DEAQ). The active-site Proton acceptor is Glu96. Cys152, Cys155, Cys184, and Cys187 together coordinate Zn(2+).

This sequence belongs to the thymidine kinase family. Homotetramer.

It is found in the cytoplasm. The enzyme catalyses thymidine + ATP = dTMP + ADP + H(+). This Porphyromonas gingivalis (strain ATCC 33277 / DSM 20709 / CIP 103683 / JCM 12257 / NCTC 11834 / 2561) protein is Thymidine kinase.